Consider the following 406-residue polypeptide: Interactor protein for cytohesin exchange factors 1 (406 aa).

A PH domain is found at 13-112 (HADCQGWLYK…WLNKLGFAVT (100 aa)). Disordered stretches follow at residues 118 to 173 (TKDE…FSSL), 228 to 285 (CRVS…EDDE), and 383 to 406 (PQDPEVTPQEIMNPTSSDCVENSL). Acidic residues predominate over residues 123-134 (CYSESEQEDPET). The span at 144-160 (ASATSSPVAARRASSSS) shows a compositional bias: low complexity. Over residues 228–239 (CRVSENSSTTPE) the composition is skewed to polar residues. A compositionally biased stretch (low complexity) spans 243–259 (LNSLSSDDTSSLNNSQD). The segment covering 272–285 (MTDRDEIKSSEDDE) has biased composition (basic and acidic residues). Residues 285–406 (EMEKLYKSLE…TSSDCVENSL (122 aa)) are necessary for interaction with PSCD2 and to translocate to the plasma membrane. Polar residues predominate over residues 392–406 (EIMNPTSSDCVENSL).

As to quaternary structure, interacts with guanine-nucleotide exchange factors PSCD1, PSCD2, PSCD3 and PSCD4. As to expression, expressed in brain, spleen, lung, testis and kidney.

The protein localises to the cytoplasm. The protein resides in the cell membrane. Enhances the promotion of guanine-nucleotide exchange by PSCD2 on ARF6 in a concentration-dependent manner. The sequence is that of Interactor protein for cytohesin exchange factors 1 (Ipcef1) from Rattus norvegicus (Rat).